A 194-amino-acid polypeptide reads, in one-letter code: Holliday junction branch migration complex subunit RuvA (194 aa).

Residues 1-64 (MIGRLRGILA…EDSVSLYGFL (64 aa)) are domain I. Positions 65 to 140 (REGERRLFRD…RAADFSSGAP (76 aa)) are domain II. The segment at 140-144 (PITGQ) is flexible linker. A domain III region spans residues 145–194 (LGPDAISEATVALQQLGYKPAEAARMARDAGAEGGEVATVIRKALQAALR).

The protein belongs to the RuvA family. In terms of assembly, homotetramer. Forms an RuvA(8)-RuvB(12)-Holliday junction (HJ) complex. HJ DNA is sandwiched between 2 RuvA tetramers; dsDNA enters through RuvA and exits via RuvB. An RuvB hexamer assembles on each DNA strand where it exits the tetramer. Each RuvB hexamer is contacted by two RuvA subunits (via domain III) on 2 adjacent RuvB subunits; this complex drives branch migration. In the full resolvosome a probable DNA-RuvA(4)-RuvB(12)-RuvC(2) complex forms which resolves the HJ.

The protein resides in the cytoplasm. The RuvA-RuvB-RuvC complex processes Holliday junction (HJ) DNA during genetic recombination and DNA repair, while the RuvA-RuvB complex plays an important role in the rescue of blocked DNA replication forks via replication fork reversal (RFR). RuvA specifically binds to HJ cruciform DNA, conferring on it an open structure. The RuvB hexamer acts as an ATP-dependent pump, pulling dsDNA into and through the RuvAB complex. HJ branch migration allows RuvC to scan DNA until it finds its consensus sequence, where it cleaves and resolves the cruciform DNA. In Xanthomonas oryzae pv. oryzae (strain MAFF 311018), this protein is Holliday junction branch migration complex subunit RuvA.